The sequence spans 426 residues: UPF0597 protein CLD_2825 (426 aa).

Belongs to the UPF0597 family.

The protein is UPF0597 protein CLD_2825 of Clostridium botulinum (strain Okra / Type B1).